A 320-amino-acid chain; its full sequence is Protein EI24 homolog (320 aa).

3 helical membrane passes run 41 to 61, 94 to 114, and 175 to 195; these read QCFL…KWFI, GLLQ…SFIL, and ILLL…PYIG. Asn-217 carries an N-linked (GlcNAc...) asparagine glycan. 3 helical membrane-spanning segments follow: residues 227 to 247, 248 to 268, and 292 to 312; these read LDFF…CVLA, IFFL…PLFV, and LGKL…LSIF.

The protein belongs to the EI24 (TC 9.B.7) family.

Its subcellular location is the membrane. The polypeptide is Protein EI24 homolog (Arabidopsis thaliana (Mouse-ear cress)).